The chain runs to 106 residues: MSQFENVTIIKKANVYYDGKVTSRSILFQDGSKKTLGILMPGQYDFGTDEKEIMEILDGELLVKLPGQEVWSEIKGGQSFEVPAKSRFQMDVKKISDYCCSYIQNS.

The protein belongs to the nucleoside phosphorylase PpnP family.

The catalysed reaction is a purine D-ribonucleoside + phosphate = a purine nucleobase + alpha-D-ribose 1-phosphate. It carries out the reaction adenosine + phosphate = alpha-D-ribose 1-phosphate + adenine. It catalyses the reaction cytidine + phosphate = cytosine + alpha-D-ribose 1-phosphate. The enzyme catalyses guanosine + phosphate = alpha-D-ribose 1-phosphate + guanine. The catalysed reaction is inosine + phosphate = alpha-D-ribose 1-phosphate + hypoxanthine. It carries out the reaction thymidine + phosphate = 2-deoxy-alpha-D-ribose 1-phosphate + thymine. It catalyses the reaction uridine + phosphate = alpha-D-ribose 1-phosphate + uracil. The enzyme catalyses xanthosine + phosphate = alpha-D-ribose 1-phosphate + xanthine. Its function is as follows. Catalyzes the phosphorolysis of diverse nucleosides, yielding D-ribose 1-phosphate and the respective free bases. Can use uridine, adenosine, guanosine, cytidine, thymidine, inosine and xanthosine as substrates. Also catalyzes the reverse reactions. This is Pyrimidine/purine nucleoside phosphorylase from Leptospira interrogans serogroup Icterohaemorrhagiae serovar copenhageni (strain Fiocruz L1-130).